The sequence spans 381 residues: UDP-4-amino-4-deoxy-L-arabinose--oxoglutarate aminotransferase (381 aa).

K182 carries the N6-(pyridoxal phosphate)lysine modification.

Belongs to the DegT/DnrJ/EryC1 family. ArnB subfamily. Homodimer. Pyridoxal 5'-phosphate serves as cofactor.

The catalysed reaction is UDP-4-amino-4-deoxy-beta-L-arabinose + 2-oxoglutarate = UDP-beta-L-threo-pentopyranos-4-ulose + L-glutamate. It participates in nucleotide-sugar biosynthesis; UDP-4-deoxy-4-formamido-beta-L-arabinose biosynthesis; UDP-4-deoxy-4-formamido-beta-L-arabinose from UDP-alpha-D-glucuronate: step 2/3. Its pathway is bacterial outer membrane biogenesis; lipopolysaccharide biosynthesis. Catalyzes the conversion of UDP-4-keto-arabinose (UDP-Ara4O) to UDP-4-amino-4-deoxy-L-arabinose (UDP-L-Ara4N). The modified arabinose is attached to lipid A and is required for resistance to polymyxin and cationic antimicrobial peptides. This chain is UDP-4-amino-4-deoxy-L-arabinose--oxoglutarate aminotransferase, found in Edwardsiella ictaluri (strain 93-146).